The sequence spans 198 residues: Chromophore lyase CpcS/CpeS 2 (198 aa).

Belongs to the CpcS/CpeS biliprotein lyase family.

Its subcellular location is the plastid. The protein localises to the organellar chromatophore. In terms of biological role, covalently attaches a chromophore to Cys residue(s) of phycobiliproteins. The chain is Chromophore lyase CpcS/CpeS 2 from Paulinella chromatophora.